Here is a 92-residue protein sequence, read N- to C-terminus: Large ribosomal subunit protein eL43y (92 aa).

Residues 39–60 form a C4-type zinc finger; the sequence is CEFCGKYGVKRKAVGIWGCKDC.

The protein belongs to the eukaryotic ribosomal protein eL43 family.

The chain is Large ribosomal subunit protein eL43y (RPL37AC) from Arabidopsis thaliana (Mouse-ear cress).